We begin with the raw amino-acid sequence, 369 residues long: Chorismate synthase (369 aa).

Residues Arg48 and Arg54 each contribute to the NADP(+) site. Residues 125–127 (RSS), 238–239 (NA), Gly278, 293–297 (KPTSS), and Arg319 each bind FMN.

Belongs to the chorismate synthase family. As to quaternary structure, homotetramer. The cofactor is FMNH2.

The enzyme catalyses 5-O-(1-carboxyvinyl)-3-phosphoshikimate = chorismate + phosphate. Its pathway is metabolic intermediate biosynthesis; chorismate biosynthesis; chorismate from D-erythrose 4-phosphate and phosphoenolpyruvate: step 7/7. Functionally, catalyzes the anti-1,4-elimination of the C-3 phosphate and the C-6 proR hydrogen from 5-enolpyruvylshikimate-3-phosphate (EPSP) to yield chorismate, which is the branch point compound that serves as the starting substrate for the three terminal pathways of aromatic amino acid biosynthesis. This reaction introduces a second double bond into the aromatic ring system. This Nitrosococcus oceani (strain ATCC 19707 / BCRC 17464 / JCM 30415 / NCIMB 11848 / C-107) protein is Chorismate synthase.